A 421-amino-acid chain; its full sequence is ATP-dependent RNA helicase RhlB (421 aa).

The short motif at 9 to 37 (QKFSDFALHPKVVEALEKKGFHNCTPIQA) is the Q motif element. Positions 40–219 (LPLTLAGRDV…FEQMNNAEYI (180 aa)) constitute a Helicase ATP-binding domain. ATP is bound at residue 53-60 (AQTGTGKT). A DEAD box motif is present at residues 165–168 (DEAD). One can recognise a Helicase C-terminal domain in the interval 245–390 (RLLQTLIEEE…VSKYNPDALM (146 aa)). The tract at residues 392–421 (DLPKPLRLTRPRTGNGPRRTGAPRNRRRSG) is disordered. Low complexity predominate over residues 402–414 (PRTGNGPRRTGAP).

The protein belongs to the DEAD box helicase family. RhlB subfamily. Component of the RNA degradosome, which is a multiprotein complex involved in RNA processing and mRNA degradation.

It localises to the cytoplasm. It catalyses the reaction ATP + H2O = ADP + phosphate + H(+). Its function is as follows. DEAD-box RNA helicase involved in RNA degradation. Has RNA-dependent ATPase activity and unwinds double-stranded RNA. The sequence is that of ATP-dependent RNA helicase RhlB from Escherichia fergusonii (strain ATCC 35469 / DSM 13698 / CCUG 18766 / IAM 14443 / JCM 21226 / LMG 7866 / NBRC 102419 / NCTC 12128 / CDC 0568-73).